The sequence spans 92 residues: Alpha-conotoxin-like Rt20.2 (92 aa).

A signal peptide spans 1-24 (MPKLEMMLLVLLILPLSYFSAAGG). Residues 25-45 (QVVQGDLHSDVLARYLQRGDR) constitute a propeptide that is removed on maturation. Residue glutamate 49 is modified to 4-carboxyglutamate. Proline 55 carries the 4-hydroxyproline modification. 4 disulfides stabilise this stretch: cysteine 63/cysteine 72, cysteine 68/cysteine 80, cysteine 73/cysteine 90, and cysteine 78/cysteine 92.

This sequence belongs to the conotoxin D superfamily. As to quaternary structure, hetero-, homo- or pseudo-homodimer (identical sequence, different post-translational modifications). Expressed by the venom duct.

The protein localises to the secreted. Functionally, alpha-conotoxins act on postsynaptic membranes, they bind to the nicotinic acetylcholine receptors (nAChR) and thus inhibit them. Through its two C-terminal domains, this homodimeric protein would bind to two nAChR allosteric sites, located outside the nAChR C-loop of the principal binding face and at the adjacent binding interface in a clockwise direction. This toxin specifically blocks mammalian neuronal nAChR of the alpha-7/CHRNA7, alpha-3-beta-2/CHRNA3-CHRNB2 and alpha-4-beta-2/CHRNA4-CHRNB2 subtypes. The chain is Alpha-conotoxin-like Rt20.2 from Conus rattus (Rat cone).